The sequence spans 2065 residues: WD repeat-containing protein 81 (2065 aa).

The region spanning 325–617 (LCRNCQDELK…EPPHFGRVNV (293 aa)) is the BEACH domain. 4 disordered regions span residues 1082 to 1111 (EEEE…GGSG), 1156 to 1230 (TTVG…VEDR), 1271 to 1290 (GEKN…DSEE), and 1595 to 1642 (ASPG…GGDI). Residues 1101-1111 (KVGGGSGGGSG) show a composition bias toward gly residues. Over residues 1156 to 1169 (TTVGTKQQNQSTAN) the composition is skewed to polar residues. The span at 1213–1228 (DGEDGGELEDEEETVE) shows a compositional bias: acidic residues. Positions 1624 to 1637 (SRSPFPAPSSTSTP) are enriched in low complexity. WD repeat units lie at residues 1767–1806 (GHSG…DGTR), 1813–1853 (TYTE…NIRC), 1906–1945 (LSAG…VLRG), 1948–1986 (GHEG…PLHQ), and 2035–2065 (NFRG…RLLA).

This sequence belongs to the WD repeat WDR81 family. Widely expressed.

It localises to the early endosome membrane. It is found in the late endosome membrane. The protein localises to the lysosome membrane. The protein resides in the cytoplasmic vesicle. Its subcellular location is the autophagosome membrane. It localises to the mitochondrion. It is found in the cytoplasm. The protein localises to the cytosol. Functionally, functions as a negative regulator of the PI3 kinase/PI3K activity associated with endosomal membranes. By modifying the phosphatidylinositol 3-phosphate/PtdInsP3 content of endosomal membranes may regulate endosome fusion, recycling, sorting and early to late endosome transport. May also play a role in aggrephagy, the macroautophagic degradation of ubiquitinated protein aggregates. May also be involved in maintenance of normal mitochondrial structure and organization. The polypeptide is WD repeat-containing protein 81 (wdr81) (Danio rerio (Zebrafish)).